A 320-amino-acid chain; its full sequence is Zinc transporter ZitB (320 aa).

6 helical membrane passes run 16–36, 43–63, 85–105, 117–137, 153–173, and 180–200; these read LLAA…GGLL, LADA…LVAV, AAFV…WEAI, VPML…FWLL, LHVL…IIIL, and IDPI…WALL.

The protein belongs to the cation diffusion facilitator (CDF) transporter (TC 2.A.4) family. SLC30A subfamily.

It is found in the cell inner membrane. Its function is as follows. Involved in zinc efflux across the cytoplasmic membrane, thus reducing zinc accumulation in the cytoplasm and rendering bacteria more resistant to zinc. It may contribute to zinc homeostasis at low concentrations of zinc. The sequence is that of Zinc transporter ZitB from Pectobacterium atrosepticum (strain SCRI 1043 / ATCC BAA-672) (Erwinia carotovora subsp. atroseptica).